Consider the following 536-residue polypeptide: SNW domain-containing protein 1 (536 aa).

A disordered region spans residues 1 to 46 (MALTSFLPAPTQLSQDQLEAEEKARSQRSRQTSLVSSRREPPPYGY). At Ala-2 the chain carries N-acetylalanine. Ser-14 is modified (phosphoserine). Lys-23 is covalently cross-linked (Glycyl lysine isopeptide (Lys-Gly) (interchain with G-Cter in SUMO2)). The segment at 59–79 (GDGGAFPEIHVAQYPLDMGRK) is interaction with PPIL1. Residues Lys-81, Lys-97, Lys-115, Lys-122, Lys-141, Lys-158, and Lys-170 each participate in a glycyl lysine isopeptide (Lys-Gly) (interchain with G-Cter in SUMO2) cross-link. The SNW stretch occupies residues 174–339 (AQYIRYTPSQ…KARERRAGIK (166 aa)). A phosphoserine mark is found at Ser-182 and Ser-190. Lys-193 is covalently cross-linked (Glycyl lysine isopeptide (Lys-Gly) (interchain with G-Cter in SUMO2)). Residues 209-234 (PPRFKINKKIPRGPPSPPAPVMHSPS) are disordered. Phosphoserine occurs at positions 224, 232, and 234. Glycyl lysine isopeptide (Lys-Gly) (interchain with G-Cter in SUMO2) cross-links involve residues Lys-240, Lys-258, Lys-286, Lys-339, Lys-344, Lys-416, and Lys-441. The segment at 311–386 (KMAQKEKEKH…RSKLQRNENR (76 aa)) is disordered. Ser-446 carries the phosphoserine modification. A Glycyl lysine isopeptide (Lys-Gly) (interchain with G-Cter in SUMO2) cross-link involves residue Lys-452. Basic and acidic residues-rich tracts occupy residues 469 to 489 (TNRFVPDKEFSGSDRRQRGRE) and 503 to 530 (KFLEEAKQHGGSKRPSDSSRPKEHEHEG). The interval 469-536 (TNRFVPDKEF…EHEGKKRRKE (68 aa)) is disordered. Phosphoserine is present on residues Ser-479 and Ser-481. Lys-509 is covalently cross-linked (Glycyl lysine isopeptide (Lys-Gly) (interchain with G-Cter in SUMO2)).

Belongs to the SNW family. Identified in the spliceosome C complex. Associates with U4/U6-U5 tri-small nuclear ribonucleoproteins (U4/U6-U5 tri-snRNPs). Component of the minor spliceosome, which splices U12-type introns. Interacts with SKI, SMAD2,SMAD3, RBPJ, RB1, PABPN1, MAGEA1, SIRT1, FOXN3, U2AF2, PPIL1, DAXX and ATP1B4. Interacts with VDR and RXRA; preferentially associates with VDR:RXRA heterodimers. Interacts with NCOR2. Interacts with MAML1. Interacts with NOTCH1 NICD; the interaction involves multimerized NOTCH1 NICD. Forms a complex with NOTCH1 NICD and MAML1; the association is dissociated by RBPJ. Associates with positive transcription elongation factor b (P-TEFb). Component of the SNARP complex which consists at least of SNIP1, SNW1, THRAP3, BCLAF1 and PNN.

It is found in the nucleus. In terms of biological role, involved in pre-mRNA splicing as component of the spliceosome. As a component of the minor spliceosome, involved in the splicing of U12-type introns in pre-mRNAs. Required in the specific splicing of CDKN1A pre-mRNA; the function probably involves the recruitment of U2AF2 to the mRNA. May recruit PPIL1 to the spliceosome. May be involved in cyclin-D1/CCND1 mRNA stability through the SNARP complex which associates with both the 3'end of the CCND1 gene and its mRNA. Involved in transcriptional regulation. Modulates TGF-beta-mediated transcription via association with SMAD proteins, MYOD1-mediated transcription via association with PABPN1, RB1-mediated transcriptional repression, and retinoid-X receptor (RXR)- and vitamin D receptor (VDR)-dependent gene transcription in a cell line-specific manner probably involving coactivators NCOA1 and GRIP1. Is involved in NOTCH1-mediated transcriptional activation. Binds to multimerized forms of Notch intracellular domain (NICD) and is proposed to recruit transcriptional coactivators such as MAML1 to form an intermediate preactivation complex which associates with DNA-bound CBF-1/RBPJ to form a transcriptional activation complex by releasing SNW1 and redundant NOTCH1 NICD. The chain is SNW domain-containing protein 1 (SNW1) from Pongo abelii (Sumatran orangutan).